The sequence spans 178 residues: Cytochrome b6-f complex iron-sulfur subunit 2 (178 aa).

The chain crosses the membrane as a helical span at residues 17–36 (LLNFFTGAIVAATASAAIYP). The 101-residue stretch at 61–161 (GHPIPASQIL…VQVKDDYIWI (101 aa)) folds into the Rieske domain. [2Fe-2S] cluster is bound by residues cysteine 107, histidine 109, cysteine 125, and histidine 128. A disulfide bond links cysteine 112 and cysteine 127.

This sequence belongs to the Rieske iron-sulfur protein family. As to quaternary structure, the 4 large subunits of the cytochrome b6-f complex are cytochrome b6, subunit IV (17 kDa polypeptide, PetD), cytochrome f and the Rieske protein, while the 4 small subunits are PetG, PetL, PetM and PetN. The complex functions as a dimer. [2Fe-2S] cluster is required as a cofactor.

The protein localises to the cellular thylakoid membrane. The enzyme catalyses 2 oxidized [plastocyanin] + a plastoquinol + 2 H(+)(in) = 2 reduced [plastocyanin] + a plastoquinone + 4 H(+)(out). Functionally, component of the cytochrome b6-f complex, which mediates electron transfer between photosystem II (PSII) and photosystem I (PSI), cyclic electron flow around PSI, and state transitions. The polypeptide is Cytochrome b6-f complex iron-sulfur subunit 2 (Trichormus variabilis (strain ATCC 29413 / PCC 7937) (Anabaena variabilis)).